A 523-amino-acid polypeptide reads, in one-letter code: Putative glucosylceramidase 1 (523 aa).

The signal sequence occupies residues 1-23 (MKSRFLLKIFIFLAVFGVDSVRA). Asn-168 is a glycosylation site (N-linked (GlcNAc...) asparagine). The active-site Nucleophile is Glu-358.

It belongs to the glycosyl hydrolase 30 family.

It catalyses the reaction a beta-D-glucosylceramide + H2O = an N-acyl-sphingoid base + D-glucose. The enzyme catalyses a beta-D-glucosyl-(1&lt;-&gt;1')-N-acylsphing-4-enine + H2O = an N-acylsphing-4-enine + D-glucose. The catalysed reaction is an N-acyl-1-beta-D-glucosyl-15-methylhexadecasphing-4-enine + H2O = an N-acyl-15-methylhexadecasphing-4-enine + D-glucose. Its pathway is lipid metabolism; sphingolipid metabolism. In terms of biological role, glucosylceramidase that catalyzes the hydrolysis of glucosylceramides into free ceramides and glucose. C.elegans contains specific sphingoid bases, which are unique or different in structure compared to the sphingoid bases found in other animals. Two examples of these distinctive compounds are: 15-methylhexadecasphinganine and 15-methylhexadecasphing-4-enine. The polypeptide is Putative glucosylceramidase 1 (gba-1) (Caenorhabditis elegans).